Reading from the N-terminus, the 312-residue chain is tRNA dimethylallyltransferase (312 aa).

G10–S17 serves as a coordination point for ATP. Position 12-17 (T12–S17) interacts with substrate. Positions D35–Q38 are interaction with substrate tRNA.

Belongs to the IPP transferase family. Monomer. The cofactor is Mg(2+).

The catalysed reaction is adenosine(37) in tRNA + dimethylallyl diphosphate = N(6)-dimethylallyladenosine(37) in tRNA + diphosphate. Its function is as follows. Catalyzes the transfer of a dimethylallyl group onto the adenine at position 37 in tRNAs that read codons beginning with uridine, leading to the formation of N6-(dimethylallyl)adenosine (i(6)A). This Anaplasma phagocytophilum (strain HZ) protein is tRNA dimethylallyltransferase.